Reading from the N-terminus, the 79-residue chain is Sulfur carrier protein TusA (79 aa).

C16 functions as the Cysteine persulfide intermediate in the catalytic mechanism.

Belongs to the sulfur carrier protein TusA family.

Its subcellular location is the cytoplasm. Sulfur carrier protein which probably makes part of a sulfur-relay system. The protein is Sulfur carrier protein TusA of Pseudomonas paraeruginosa (strain DSM 24068 / PA7) (Pseudomonas aeruginosa (strain PA7)).